We begin with the raw amino-acid sequence, 185 residues long: Inner membrane lipoprotein DcrB (185 aa).

A signal peptide spans 1 to 19 (MRNLVKYVGIGLLVMGLAA). The N-palmitoyl cysteine moiety is linked to residue cysteine 20. Cysteine 20 carries S-diacylglycerol cysteine lipidation.

The protein belongs to the DcrB family.

Its subcellular location is the cell membrane. Functionally, plays a role in cell envelope biogenesis, maintenance of cell envelope integrity and membrane homeostasis. Essential for lipoprotein maturation under conditions where membrane fluidity may be altered. The protein is Inner membrane lipoprotein DcrB of Shigella flexneri.